The following is a 144-amino-acid chain: Globin-1 (144 aa).

The 141-residue stretch at 1-141 (VSANDIKNVQ…ILHQMSSYFA (141 aa)) folds into the Globin domain. A heme b-binding site is contributed by His-89.

It belongs to the globin family. Homodimer.

The polypeptide is Globin-1 (Phreagena soyoae (Deep-sea cold-seep clam)).